Reading from the N-terminus, the 260-residue chain is NAD-capped RNA hydrolase NudC (260 aa).

The substrate site is built by K25 and R69. Residues C98 and C101 each contribute to the Zn(2+) site. Residue E111 participates in substrate binding. Zn(2+) is bound by residues C116 and C119. Y124 lines the substrate pocket. Positions 125 to 248 (PQIAPCVIVA…TVARRLIEDT (124 aa)) constitute a Nudix hydrolase domain. A divalent metal cation contacts are provided by A158, E174, and E178. The Nudix box motif lies at 159–180 (GFVEVGETLEQAVSREVLEESN). 192 to 199 (QPWPFPHS) contacts substrate. E219 contributes to the a divalent metal cation binding site. A241 contributes to the substrate binding site.

The protein belongs to the Nudix hydrolase family. NudC subfamily. Homodimer. Mg(2+) is required as a cofactor. Mn(2+) serves as cofactor. The cofactor is Zn(2+).

It carries out the reaction a 5'-end NAD(+)-phospho-ribonucleoside in mRNA + H2O = a 5'-end phospho-adenosine-phospho-ribonucleoside in mRNA + beta-nicotinamide D-ribonucleotide + 2 H(+). It catalyses the reaction NAD(+) + H2O = beta-nicotinamide D-ribonucleotide + AMP + 2 H(+). The catalysed reaction is NADH + H2O = reduced beta-nicotinamide D-ribonucleotide + AMP + 2 H(+). MRNA decapping enzyme that specifically removes the nicotinamide adenine dinucleotide (NAD) cap from a subset of mRNAs by hydrolyzing the diphosphate linkage to produce nicotinamide mononucleotide (NMN) and 5' monophosphate mRNA. The NAD-cap is present at the 5'-end of some mRNAs and stabilizes RNA against 5'-processing. Has preference for mRNAs with a 5'-end purine. Catalyzes the hydrolysis of a broad range of dinucleotide pyrophosphates. The sequence is that of NAD-capped RNA hydrolase NudC from Yersinia pestis bv. Antiqua (strain Antiqua).